The chain runs to 178 residues: Bifunctional protein PyrR (178 aa).

The PRPP-binding signature appears at 99-111; the sequence is VILVDDVLFTGRT.

Belongs to the purine/pyrimidine phosphoribosyltransferase family. PyrR subfamily. As to quaternary structure, homodimer and homohexamer; in equilibrium.

It catalyses the reaction UMP + diphosphate = 5-phospho-alpha-D-ribose 1-diphosphate + uracil. In terms of biological role, regulates transcriptional attenuation of the pyrimidine nucleotide (pyr) operon by binding in a uridine-dependent manner to specific sites on pyr mRNA. This disrupts an antiterminator hairpin in the RNA and favors formation of a downstream transcription terminator, leading to a reduced expression of downstream genes. Its function is as follows. Also displays a weak uracil phosphoribosyltransferase activity which is not physiologically significant. This Ligilactobacillus salivarius (strain UCC118) (Lactobacillus salivarius) protein is Bifunctional protein PyrR.